Consider the following 191-residue polypeptide: Putative 3-methyladenine DNA glycosylase (191 aa).

It belongs to the DNA glycosylase MPG family.

In Cutibacterium acnes (strain DSM 16379 / KPA171202) (Propionibacterium acnes), this protein is Putative 3-methyladenine DNA glycosylase.